A 1271-amino-acid polypeptide reads, in one-letter code: DNA-directed RNA polymerase subunit beta (1271 aa).

The protein belongs to the RNA polymerase beta chain family. In terms of assembly, the RNAP catalytic core consists of 2 alpha, 1 beta, 1 beta' and 1 omega subunit. When a sigma factor is associated with the core the holoenzyme is formed, which can initiate transcription.

It carries out the reaction RNA(n) + a ribonucleoside 5'-triphosphate = RNA(n+1) + diphosphate. Its function is as follows. DNA-dependent RNA polymerase catalyzes the transcription of DNA into RNA using the four ribonucleoside triphosphates as substrates. The polypeptide is DNA-directed RNA polymerase subunit beta (Acholeplasma laidlawii (strain PG-8A)).